We begin with the raw amino-acid sequence, 360 residues long: Phosphoserine aminotransferase (360 aa).

Arg-42 provides a ligand contact to L-glutamate. Pyridoxal 5'-phosphate contacts are provided by residues 76–77, Trp-102, Thr-153, Asp-172, and Gln-195; that span reads AR. Lys-196 bears the N6-(pyridoxal phosphate)lysine mark. A pyridoxal 5'-phosphate-binding site is contributed by 237–238; that stretch reads NT.

The protein belongs to the class-V pyridoxal-phosphate-dependent aminotransferase family. SerC subfamily. Homodimer. The cofactor is pyridoxal 5'-phosphate.

It localises to the cytoplasm. It catalyses the reaction O-phospho-L-serine + 2-oxoglutarate = 3-phosphooxypyruvate + L-glutamate. The enzyme catalyses 4-(phosphooxy)-L-threonine + 2-oxoglutarate = (R)-3-hydroxy-2-oxo-4-phosphooxybutanoate + L-glutamate. It functions in the pathway amino-acid biosynthesis; L-serine biosynthesis; L-serine from 3-phospho-D-glycerate: step 2/3. Its pathway is cofactor biosynthesis; pyridoxine 5'-phosphate biosynthesis; pyridoxine 5'-phosphate from D-erythrose 4-phosphate: step 3/5. Functionally, catalyzes the reversible conversion of 3-phosphohydroxypyruvate to phosphoserine and of 3-hydroxy-2-oxo-4-phosphonooxybutanoate to phosphohydroxythreonine. The sequence is that of Phosphoserine aminotransferase from Photobacterium profundum (strain SS9).